The chain runs to 336 residues: Dihydroorotate dehydrogenase (quinone) (336 aa).

FMN contacts are provided by residues 62–66 and T86; that span reads AGLDK. Residue K66 coordinates substrate. 111–115 lines the substrate pocket; that stretch reads NRMGF. 2 residues coordinate FMN: N139 and N172. Substrate is bound at residue N172. Residue S175 is the Nucleophile of the active site. N177 contributes to the substrate binding site. FMN is bound by residues K217 and T245. 246–247 is a substrate binding site; sequence NT. FMN-binding positions include G268, G297, and 318-319; that span reads YS.

This sequence belongs to the dihydroorotate dehydrogenase family. Type 2 subfamily. As to quaternary structure, monomer. Requires FMN as cofactor.

It localises to the cell membrane. The enzyme catalyses (S)-dihydroorotate + a quinone = orotate + a quinol. It participates in pyrimidine metabolism; UMP biosynthesis via de novo pathway; orotate from (S)-dihydroorotate (quinone route): step 1/1. Its function is as follows. Catalyzes the conversion of dihydroorotate to orotate with quinone as electron acceptor. The sequence is that of Dihydroorotate dehydrogenase (quinone) from Salmonella typhi.